The following is a 498-amino-acid chain: Flagellin (498 aa).

It belongs to the bacterial flagellin family.

The protein resides in the secreted. It localises to the bacterial flagellum. Its function is as follows. Flagellin is the subunit protein which polymerizes to form the filaments of bacterial flagella. The chain is Flagellin (fliC) from Escherichia coli (strain K12).